We begin with the raw amino-acid sequence, 76 residues long: Exodeoxyribonuclease 7 small subunit (76 aa).

Belongs to the XseB family. As to quaternary structure, heterooligomer composed of large and small subunits.

Its subcellular location is the cytoplasm. The enzyme catalyses Exonucleolytic cleavage in either 5'- to 3'- or 3'- to 5'-direction to yield nucleoside 5'-phosphates.. In terms of biological role, bidirectionally degrades single-stranded DNA into large acid-insoluble oligonucleotides, which are then degraded further into small acid-soluble oligonucleotides. This chain is Exodeoxyribonuclease 7 small subunit, found in Bacillus cytotoxicus (strain DSM 22905 / CIP 110041 / 391-98 / NVH 391-98).